The following is a 529-amino-acid chain: Glucocorticoid modulatory element-binding protein 2 (529 aa).

One can recognise an SAND domain in the interval 80–162 (EEGENLEAEI…RKIMDSGELD (83 aa)). Cysteine 109 provides a ligand contact to Zn(2+). Lysine 135, lysine 139, lysine 142, and arginine 153 together coordinate DNA. Lysine 154 participates in a covalent cross-link: Glycyl lysine isopeptide (Lys-Gly) (interchain with G-Cter in SUMO1); alternate. Lysine 154 is covalently cross-linked (Glycyl lysine isopeptide (Lys-Gly) (interchain with G-Cter in SUMO2); alternate). Residues histidine 166, cysteine 170, and cysteine 174 each coordinate Zn(2+). Positions 244–347 (LLDEVIQEFQ…HLSNVLMTLT (104 aa)) form a coiled coil. Serine 372 carries the post-translational modification Phosphoserine.

In terms of assembly, homodimer, and heterodimer of GMEB1 and GMEB2. Interacts with the glucocorticoid receptor (NR3C1). May interact with CREB-binding protein (CBP).

It localises to the nucleus. It is found in the cytoplasm. Its function is as follows. Trans-acting factor that binds to glucocorticoid modulatory elements (GME) present in the TAT (tyrosine aminotransferase) promoter and increases sensitivity to low concentrations of glucocorticoids. Also binds to the transferrin receptor promoter. The chain is Glucocorticoid modulatory element-binding protein 2 (Gmeb2) from Rattus norvegicus (Rat).